A 596-amino-acid chain; its full sequence is Elongation factor 4 (596 aa).

Positions 2-184 constitute a tr-type G domain; sequence KHIRNFSIIA…VIVEQIPPPE (183 aa). GTP contacts are provided by residues 14 to 19 and 131 to 134; these read DHGKST and NKID.

Belongs to the TRAFAC class translation factor GTPase superfamily. Classic translation factor GTPase family. LepA subfamily.

The protein resides in the cell inner membrane. It carries out the reaction GTP + H2O = GDP + phosphate + H(+). Functionally, required for accurate and efficient protein synthesis under certain stress conditions. May act as a fidelity factor of the translation reaction, by catalyzing a one-codon backward translocation of tRNAs on improperly translocated ribosomes. Back-translocation proceeds from a post-translocation (POST) complex to a pre-translocation (PRE) complex, thus giving elongation factor G a second chance to translocate the tRNAs correctly. Binds to ribosomes in a GTP-dependent manner. This is Elongation factor 4 from Shewanella pealeana (strain ATCC 700345 / ANG-SQ1).